An 84-amino-acid chain; its full sequence is UPF0386 protein Oant_1614 (84 aa).

The protein belongs to the UPF0386 family.

This Brucella anthropi (strain ATCC 49188 / DSM 6882 / CCUG 24695 / JCM 21032 / LMG 3331 / NBRC 15819 / NCTC 12168 / Alc 37) (Ochrobactrum anthropi) protein is UPF0386 protein Oant_1614.